We begin with the raw amino-acid sequence, 307 residues long: 3-ketodihydrosphingosine reductase TSC10 (307 aa).

Leu-11 is an NADP(+) binding site. 3 residues coordinate NADPH: Gly-14, Ser-16, and Gly-18. The GXSXG signature appears at 14-18 (GGSQG). Leu-19 is a binding site for NADP(+). Residues Arg-40, Lys-44, and Leu-74 each contribute to the NADPH site. The active-site Proton donor is Ser-147. NADP(+)-binding residues include Tyr-161, Lys-165, and Ser-194. Tyr-161 acts as the Proton acceptor in catalysis. Lys-165 acts as the Lowers pKa of active site Tyr in catalysis. A helical membrane pass occupies residues 261–281 (YFLWPLGWLLGALVNLLVVPI).

The protein belongs to the short-chain dehydrogenases/reductases (SDR) family.

It is found in the endoplasmic reticulum membrane. It catalyses the reaction sphinganine + NADP(+) = 3-oxosphinganine + NADPH + H(+). It participates in lipid metabolism; sphingolipid metabolism. Functionally, catalyzes the reduction of 3'-oxosphinganine (3-ketodihydrosphingosine/KDS) to sphinganine (dihydrosphingosine/DHS), the second step of de novo sphingolipid biosynthesis. The sequence is that of 3-ketodihydrosphingosine reductase TSC10 (TSC10) from Eremothecium gossypii (strain ATCC 10895 / CBS 109.51 / FGSC 9923 / NRRL Y-1056) (Yeast).